A 321-amino-acid polypeptide reads, in one-letter code: Cilia- and flagella-associated protein 161 (321 aa).

The tract at residues 275–321 is disordered; sequence LSTMLDLPKPPAEDTRALEQEREQVSDPGARSTPDARGCVPQCTLPM. Basic and acidic residues predominate over residues 285 to 299; sequence PAEDTRALEQEREQV.

In terms of assembly, microtubule inner protein component of sperm flagellar doublet microtubules. As to expression, expressed in trachea multiciliated cells.

The protein resides in the cytoplasm. It localises to the cytoskeleton. Its subcellular location is the cilium axoneme. It is found in the flagellum axoneme. Functionally, microtubule inner protein (MIP) part of the dynein-decorated doublet microtubules (DMTs) in cilia axoneme, which is required for motile cilia beating. The sequence is that of Cilia- and flagella-associated protein 161 from Bos taurus (Bovine).